Here is a 5121-residue protein sequence, read N- to C-terminus: Hydrocephalus-inducing protein homolog (5121 aa).

The segment at 363 to 754 is interaction with KIF9; that stretch reads EFFEECITDP…VLFSSPTPSG (392 aa). Residues 956 to 967 show a composition bias toward basic residues; that stretch reads LSKKGRVKKGHA. 7 disordered regions span residues 956–987, 1925–1951, 2155–2186, 2333–2459, 2482–2534, 2664–2684, and 3852–3874; these read LSKK…SPVF, LAQE…TSLS, SKAD…LPPG, EQER…KFKT, LPPA…AERE, TNTT…KQKM, and KPDH…TGST. The stretch at 1908–1933 forms a coiled coil; it reads EIKKSKEEQMRAKYLENLAQENEEED. Polar residues predominate over residues 1936–1951; sequence SSDQGTSNSTKRTSLS. The stretch at 2267–2365 forms a coiled coil; sequence AQDYAAMKAQ…EDELKRRVKK (99 aa). Composition is skewed to basic and acidic residues over residues 2333–2360, 2393–2418, 2444–2453, 2489–2498, and 2509–2534; these read EQER…DELK, VDVK…EELN, DNSKDPDKQL, EAPHEPDDQR, and KDRE…AERE. Residues 2504–2549 are a coiled coil; sequence GRRGRKDRERERLEKERTEKERLEREKAERERLEKLRALEERSDWE. Polar residues-rich tracts occupy residues 2664–2679 and 3857–3874; these read TNTT…SSKG and GSAQ…TGST.

Interacts with KIF9.

The protein resides in the cell projection. It localises to the cilium. It is found in the cytoplasm. The protein localises to the cytoskeleton. Its subcellular location is the cilium axoneme. The protein resides in the flagellum. In terms of biological role, required for ciliary motility. The sequence is that of Hydrocephalus-inducing protein homolog (HYDIN) from Homo sapiens (Human).